Here is a 120-residue protein sequence, read N- to C-terminus: NAD(P)H-quinone oxidoreductase subunit 3, chloroplastic (120 aa).

3 helical membrane passes run 9-29 (IFWA…LISA), 64-84 (MFAL…PWAM), and 88-108 (VLGV…IVGL).

It belongs to the complex I subunit 3 family. As to quaternary structure, NDH is composed of at least 16 different subunits, 5 of which are encoded in the nucleus.

Its subcellular location is the plastid. The protein resides in the chloroplast thylakoid membrane. The catalysed reaction is a plastoquinone + NADH + (n+1) H(+)(in) = a plastoquinol + NAD(+) + n H(+)(out). It catalyses the reaction a plastoquinone + NADPH + (n+1) H(+)(in) = a plastoquinol + NADP(+) + n H(+)(out). Functionally, NDH shuttles electrons from NAD(P)H:plastoquinone, via FMN and iron-sulfur (Fe-S) centers, to quinones in the photosynthetic chain and possibly in a chloroplast respiratory chain. The immediate electron acceptor for the enzyme in this species is believed to be plastoquinone. Couples the redox reaction to proton translocation, and thus conserves the redox energy in a proton gradient. The protein is NAD(P)H-quinone oxidoreductase subunit 3, chloroplastic of Citrus sinensis (Sweet orange).